The chain runs to 419 residues: tRNA(Met) cytidine acetate ligase (419 aa).

ATP is bound by residues 7–20, Gly-101, Asn-163, and Arg-188; that span reads ITEYNPFHNGHLHH.

Belongs to the TmcAL family.

The protein localises to the cytoplasm. The catalysed reaction is cytidine(34) in elongator tRNA(Met) + acetate + ATP = N(4)-acetylcytidine(34) in elongator tRNA(Met) + AMP + diphosphate. Functionally, catalyzes the formation of N(4)-acetylcytidine (ac(4)C) at the wobble position of elongator tRNA(Met), using acetate and ATP as substrates. First activates an acetate ion to form acetyladenylate (Ac-AMP) and then transfers the acetyl group to tRNA to form ac(4)C34. The polypeptide is tRNA(Met) cytidine acetate ligase (Syntrophotalea carbinolica (strain DSM 2380 / NBRC 103641 / GraBd1) (Pelobacter carbinolicus)).